We begin with the raw amino-acid sequence, 758 residues long: MLTHTLGFPRMGAHRELKKNLESYWKGAIGQEKLMASGRELRLRHWRLQQQAGIDLVPVGDFSYYDHMLDMVAMLGAVPPRFGWQGESVDLDTYFYMARGSSGHRTTTAMEMTKWFDTNYHYIVPEFYPGQRFRLARNRLFEELAEACIEGIQAKPVLPGPMTFIALGKEMVAGFDRWSHLDAVVEVYEEIVSRVAAKCSWIQLDEPILATDVPGPIRLRVRDVYRRLAAVAGPCRLMVATYFGALQENLDLALSLPVDGLHVDLVRAPGQLEKVLPCLPENMVLSLGLIDGRNVWRSNLRQAISTAQDAVVARGSDRVMIAPSCSLLHVPVDLAGEAVLDPRIRSWLAFARQKCQEVNVVRLALDGEDVTEVLQANDTAMENRRKSALVHRDAVRRRMADISPDMYCRRSSFEERKKQQAWLRLPTLPTTTIGSFPQVAGVRSARRSFKQGRISEEQYRAEMQRYIREAIAQQEALGLDVLVHGEPERNDMVEYFGEQLAGFCFTENGWVQGYGSRCVKPPIIYGDVERLKPMTMEWTTYAQQQTNRPLKGMLTGPVTMLCWSFVRDDQPRSATCKQIALAIRDEVQDLEQAGIKIIQVDEAALREGLPLRKSAWREYLGWAVDAFRLTASGVADSTQIHTHMCYSEFNHIAEWIAKMDADVISIEASRSNMELLGVLESFTYPNDIGPGVYDIHSPRVPSVAEMVELLRKASEVIPLERLWVNPDCGLKTRAWPETLASLRNMVAAAQKLRFFARG.

5-methyltetrahydropteroyltri-L-glutamate-binding positions include 15–18 (RELK) and K114. Residues 433-435 (IGS) and E486 contribute to the L-homocysteine site. Residues 433–435 (IGS) and E486 contribute to the L-methionine site. Residues 517-518 (RC) and W563 each bind 5-methyltetrahydropteroyltri-L-glutamate. D601 is an L-homocysteine binding site. D601 lines the L-methionine pocket. E607 contributes to the 5-methyltetrahydropteroyltri-L-glutamate binding site. The Zn(2+) site is built by H643, C645, and E667. Catalysis depends on H696, which acts as the Proton donor. C728 is a Zn(2+) binding site.

The protein belongs to the vitamin-B12 independent methionine synthase family. Requires Zn(2+) as cofactor.

The catalysed reaction is 5-methyltetrahydropteroyltri-L-glutamate + L-homocysteine = tetrahydropteroyltri-L-glutamate + L-methionine. The protein operates within amino-acid biosynthesis; L-methionine biosynthesis via de novo pathway; L-methionine from L-homocysteine (MetE route): step 1/1. Its function is as follows. Catalyzes the transfer of a methyl group from 5-methyltetrahydrofolate to homocysteine resulting in methionine formation. This Syntrophotalea carbinolica (strain DSM 2380 / NBRC 103641 / GraBd1) (Pelobacter carbinolicus) protein is 5-methyltetrahydropteroyltriglutamate--homocysteine methyltransferase.